The chain runs to 135 residues: uncharacterized protein (135 aa).

Positions 100–125 are disordered; sequence KESPATSSEDISSCSDCDSERLQSDD. Positions 106-115 are enriched in low complexity; the sequence is SSEDISSCSD.

This is an uncharacterized protein from Microplitis demolitor (Parasitoid wasp).